Reading from the N-terminus, the 309-residue chain is MERLKRMSVFAKVVEFGSFTAAARQLQMSVSSISQTVSKLEDELQVKLLNRSTRSIGLTEAGRIYYQGCRRMLHEVQDVHEQLYAFNNTPIGTLRIGCSSTMAQNVLAGLTAKMLKEYPGLSVNLVTGIPAPDLIADGLDVVIRVGALQDSSLFSRRLGAMPMVVCAAKSYLTQYGIPEKPADLSSHSWLEYSVRPDNEFELIAPEGISTRLIPQGRFVTNDPMTLVRWLTAGAGIAYVPLMWVINEINRGELEILLPRYQSDPRPVYALYTEKDKLPLKVQVVINSLTDYFVEVGKLFQEMHGRGKEK.

The 59-residue stretch at 1–59 folds into the HTH lysR-type domain; sequence MERLKRMSVFAKVVEFGSFTAAARQLQMSVSSISQTVSKLEDELQVKLLNRSTRSIGLT. The H-T-H motif DNA-binding region spans 19-38; the sequence is FTAAARQLQMSVSSISQTVS.

The protein belongs to the LysR transcriptional regulatory family.

Activity is regulated by p-hydroxybenzoic acid. Its function is as follows. Transcriptional regulator that activates expression of the aaeXAB operon, which is involved in the efflux of aromatic carboxylic acids such as p-hydroxybenzoic acid (pHBA). In the presence of the effector pHBA, acts by binding to a single target within the aaeXAB-aaeR intergenic region. In the absence of pHBA, binds more than 50 sites along the E.coli K12 genome, including genes related to biofilm formation and several genes involved in stress response, suggesting that it might play a role in quorum sensing in the absence of pHBA. This is HTH-type transcriptional activator AaeR from Escherichia coli (strain K12).